We begin with the raw amino-acid sequence, 31 residues long: Photosystem I reaction center subunit XII (31 aa).

Residues 7–26 traverse the membrane as a helical segment; it reads QIFIALLTALIPAFFALKLG.

It belongs to the PsaM family.

It is found in the plastid. The protein localises to the chloroplast thylakoid membrane. The polypeptide is Photosystem I reaction center subunit XII (Euglena granulata).